Reading from the N-terminus, the 1714-residue chain is Intersectin-1 (1714 aa).

The region spanning 21-109 (ERAKHDQQFL…PVMKQQPVAI (89 aa)) is the EH 1 domain. Residues 53 to 88 (LPQPVLAQIWALADMNNDGRMDQVEFSIAMKLIKLK) enclose the EF-hand 1 domain. Ca(2+) is bound by residues aspartate 66, asparagine 68, aspartate 70, arginine 72, and glutamate 77. Serine 203 is subject to Phosphoserine. Positions 221-310 (SRLKYRQLFN…PEYIPPSFRR (90 aa)) constitute an EH 2 domain. In terms of domain architecture, EF-hand 2 spans 254–289 (LPQAQLASIWNLSDIDQDGKLTAEEFILAMHLIDVA). 5 residues coordinate Ca(2+): aspartate 267, aspartate 269, aspartate 271, lysine 273, and glutamate 278. Low complexity predominate over residues 310 to 325 (RVRSGSGMSVISSSSV). Disordered stretches follow at residues 310–356 (RVRS…KREN) and 614–706 (SKQQ…QSRL). Residues serine 318, serine 334, and serine 335 each carry the phosphoserine modification. The interval 326–702 (DQRLPEEPSS…ERAKPEMQDK (377 aa)) is KLERQ. 2 stretches are compositionally biased toward basic and acidic residues: residues 340–356 (QPEKKLPVTFEDKKREN) and 622–706 (RSLE…QSRL). The stretch at 354-658 (RENFERGSVE…QRRVQERDKQ (305 aa)) forms a coiled coil. Serine 685 is modified (phosphoserine). Positions 738–799 (VKVVYYRALY…PANYAEKIPE (62 aa)) constitute an SH3 1 domain. The disordered stretch occupies residues 827–863 (APLPVTSSEPSTTPNNWADFSSTWPSSSNEKPETDNW). A compositionally biased stretch (polar residues) spans 831 to 855 (VTSSEPSTTPNNWADFSSTWPSSSN). The residue at position 890 (threonine 890) is a Phosphothreonine. 3 positions are modified to phosphoserine: serine 894, serine 895, and serine 897. One can recognise an SH3 2 domain in the interval 906–964 (VEGLQAQALYPWRAKKDNHLNFNKSDVITVLEQQDMWWFGEVQGQKGWFPKSYVKLISG). Residue serine 971 is modified to Phosphoserine. Threonine 977 carries the post-translational modification Phosphothreonine. Phosphoserine occurs at positions 979 and 988. SH3 domains are found at residues 995–1053 (IPGE…LKDS) and 1067–1131 (KKPE…LLSP). The tract at residues 1067–1131 (KKPEIAQVIA…PANYVKLLSP (65 aa)) is required for interaction with FCHSD2. The Bipartite nuclear localization signal; in isoform 2 motif lies at 1097-1120 (RKKNPGGWWEGELQARGKKRQIGW). A Phosphoserine modification is found at serine 1130. Threonine 1137 is subject to Phosphothreonine. Positions 1148 to 1207 (PAVCQVIGMYDYTAQNDDELAFSKGQIINVLNKEDPDWWKGEVSGQVGLFPSNYVKLTTD) constitute an SH3 5 domain. In terms of domain architecture, DH spans 1230–1416 (KRQGYIHELI…EELCSQVNEG (187 aa)). Residues 1455 to 1564 (KFLHSGKLYK…WVQKIKAASE (110 aa)) form the PH domain. One can recognise a C2 domain in the interval 1572-1688 (KKREKAYLVR…KKDQGSKGPV (117 aa)). Serine 1638 carries the post-translational modification Phosphoserine. The Ca(2+) site is built by aspartate 1660, serine 1663, and aspartate 1666.

As to quaternary structure, interacts (via DH domain) with CDC42. Interacts (via SH3 domain 1) with WASL. Interacts with dynamin, SNAP25 and SNAP23. Interacts with clathrin-associated proteins and other components of the endocytic machinery, such as SPIN90, EPS15, EPN1, EPN2, STON2, FCHO1, FCHO2 and DAB2. Interacts (via SH3 domains) with REPS1 and SGIP1. Interacts with ARHGAP31. Interacts with ADAM15. Interacts with PRRT2. Interacts (via SH3 domain 4) with FCHSD2 (via SH3 domain 2). Interacts (via SH3 domain 1) with DENND2B. Interacts (via SH3 domains) with CBL. Isoform 2: Interacts with CBL and DNM1. Isoform 2: Interacts with LMNA. Isoform 2: Interacts with importin subunit KPNA1; this is likely to mediate its import into the nucleus. Interacts with DNM2. Requires Ca(2+) as cofactor. As to expression, detected in brain, adrenal gland and heart. Detected in neurons at the calyx of Held (at protein level). Isoform 1: Primarily detected in brain neurons. Isoform 2: Primarily detected in glia (at protein level). Widely expressed. Expressed at high levels in brain, heart and skeletal muscle.

The protein localises to the endomembrane system. Its subcellular location is the synapse. It localises to the synaptosome. It is found in the cell projection. The protein resides in the lamellipodium. The protein localises to the cell membrane. Its subcellular location is the membrane. It localises to the clathrin-coated pit. It is found in the recycling endosome. The protein resides in the endosome. The protein localises to the cytoplasmic vesicle. Its subcellular location is the cytoplasm. It localises to the nucleus envelope. Its function is as follows. Adapter protein that provides a link between the endocytic membrane traffic and the actin assembly machinery. Acts as a guanine nucleotide exchange factor (GEF) for CDC42, and thereby stimulates actin nucleation mediated by WASL and the ARP2/3 complex. Plays a role in the assembly and maturation of clathrin-coated vesicles. Recruits FCHSD2 to clathrin-coated pits. Involved in endocytosis of activated EGFR, and probably also other growth factor receptors. Involved in endocytosis of integrin beta-1 (ITGB1) and transferrin receptor (TFR); internalization of ITGB1 as DAB2-dependent cargo but not TFR may involve association with DAB2. Promotes ubiquitination and subsequent degradation of EGFR, and thereby contributes to the down-regulation of EGFR-dependent signaling pathways. In chromaffin cells, required for normal exocytosis of catecholamines. Required for rapid replenishment of release-ready synaptic vesicles at presynaptic active zones. Inhibits ARHGAP31 activity toward RAC1. In terms of biological role, plays a role in synaptic vesicle endocytosis in brain neurons. This is Intersectin-1 from Mus musculus (Mouse).